Reading from the N-terminus, the 100-residue chain is Small ribosomal subunit protein uS14 (100 aa).

The protein belongs to the universal ribosomal protein uS14 family. In terms of assembly, part of the 30S ribosomal subunit. Contacts proteins S3 and S10.

Binds 16S rRNA, required for the assembly of 30S particles and may also be responsible for determining the conformation of the 16S rRNA at the A site. The chain is Small ribosomal subunit protein uS14 from Prochlorococcus marinus (strain NATL2A).